A 498-amino-acid polypeptide reads, in one-letter code: Putative phosphotransferase 057R (498 aa).

This is Putative phosphotransferase 057R from Dryophytes versicolor (chameleon treefrog).